Consider the following 1197-residue polypeptide: MQLYSAIFRGHIRPNAVVGAASMFIQHNSIQLHRSPKLLLRPSSVVRSLHCRRSGGLVTHSQRSRVLCVKAARGDASSSTLGIEWRAANLPYFQRQNSGYGRIAYNDYESSDESDRDVGSSQSQQMAGSTLDNIDQWRFKLTMLLRNKEDQEVVSRERKDRRDFDHISALATRMGLHSRQYSKIVVISKAPLPNYRPDLDDKRPQREVVLPFGLQSEVDAHLHSFLDQKKTLIPEMPRQNSSESLANGYGNYETPETVMQNSLARERILRPRSLQLKSKQQQWVDSPEGQKMVGFRKTLPAYKEKDALLKAIAANQVVVVSGETGCGKTTQLPQYILESEIEAARGATCSIICTQPRRISAISVSERVAAERGEQIGESVGYKVRLEGMRGRDTRLLFCTTGVLLRRLLVDRSLKGVTHVVVDEIHERGMNEDFLLIVLKDLLPRRPDLKLILMSATLNAELFSSYFGGAPAMHIPGFTYPVRAHFLEDYLETSGYRLTTYNQIDDYGEEKTWKMQKQAQFKKRKSLISSAVEDALEAADFKGYNFRTRDSLSCWSPDSIGFNLIENVLCHIVKGERPGAVLVFMTGWDDINSLKNQLEAHSLLGDPNKVLLLACHGSMASSEQRLIFDRPPEGIRKIVLATNMAETSITINDVVYVIDCGKAKETSYDALNNTPCLLPSWISKAAARQRRGRAGRVMPGECYHLYPRCVYEAFADYQQPELLRTPLQSLCLQIKSLGLGSISEFLSRALQPPEALSVQNAVEYLKIIGALDDDENLTPLGKNLSMLPVEPKLGKMLILGAIFNCLDPVMTVVAGLSVRDPFLMPFDKKDLAETARSKFSGRDYSDHLTLVRAYNGWKDAERTHSGYDYCWKNFLSSQTLKAMDSMRKQFFNLLKEASLIDNIEGCSKLSHDEHLVRAIICAGMFPGVCSVVNKEKSITLKTMEDGQVLLYSSSVNGNVPMIPFPWLVFNDKVKVNSVFLRDSTAVSDSVLLLFGDKISSGGFDGHLKMLGGYLEFFMKPTLAYTYLSLKRELDELIQNKLVNPKLDIQLYDKLMTAIRLLVSEDQCEGRFVYGRKALSPTPAKKLKDVGAQLQNSGGENNKNQLQTLLARAGHGSPVYKTRQLKNNQFRSMVTFNGLDFMGKPCGSKKNAEKDAAHEALLWLQGESKSSLNDLNHMSMLLKKNKSKNHAKASTKWG.

A Helicase ATP-binding domain is found at 309 to 476 (LKAIAANQVV…FGGAPAMHIP (168 aa)). 322-329 (GETGCGKT) provides a ligand contact to ATP. The DEIH box motif lies at 423–426 (DEIH). The Helicase C-terminal domain occupies 564–738 (LIENVLCHIV…SLCLQIKSLG (175 aa)).

This sequence belongs to the DExH box helicase family.

It catalyses the reaction ATP + H2O = ADP + phosphate + H(+). In Arabidopsis thaliana (Mouse-ear cress), this protein is DExH-box ATP-dependent RNA helicase DExH3.